The sequence spans 134 residues: MFDVTLLILLGLAALGFISHNTTVAVSILVLIIVRVTPLNTFFPWIEKQGLTVGIIILTIGVMAPIASGTLPPSTLIHSFVNWKSLVAIAVGVFVSWLGGRGITLMGNQPQLVAGLLVGTVLGVALFRGVRSAH.

Helical transmembrane passes span 14–34 (ALGFISHNTTVAVSILVLIIV), 51–71 (LTVGIIILTIGVMAPIASGTL), 86–106 (LVAIAVGVFVSWLGGRGITLM), and 110–130 (PQLVAGLLVGTVLGVALFRGV).

The protein belongs to the UPF0756 family.

The protein resides in the cell membrane. In Salmonella typhimurium (strain LT2 / SGSC1412 / ATCC 700720), this protein is UPF0756 membrane protein YeaL.